A 207-amino-acid polypeptide reads, in one-letter code: Guanylate kinase (207 aa).

The 181-residue stretch at 4–184 (GLLFIVSAPS…AVSDLYKIIR (181 aa)) folds into the Guanylate kinase-like domain. 11 to 18 (APSGTGKS) provides a ligand contact to ATP.

This sequence belongs to the guanylate kinase family.

Its subcellular location is the cytoplasm. The catalysed reaction is GMP + ATP = GDP + ADP. Its function is as follows. Essential for recycling GMP and indirectly, cGMP. The polypeptide is Guanylate kinase (Buchnera aphidicola subsp. Baizongia pistaciae (strain Bp)).